The following is a 451-amino-acid chain: E3 ubiquitin-protein ligase trul-1 (451 aa).

The RING-type; atypical zinc finger occupies cysteine 13–arginine 54. Coiled-coil stretches lie at residues leucine 96 to lysine 130 and asparagine 209 to isoleucine 243. Disordered stretches follow at residues arginine 270–proline 297 and lysine 389–serine 442. The segment covering serine 427 to serine 442 has biased composition (low complexity).

It belongs to the TRAIP family.

It localises to the nucleus. The protein localises to the chromosome. It carries out the reaction S-ubiquitinyl-[E2 ubiquitin-conjugating enzyme]-L-cysteine + [acceptor protein]-L-lysine = [E2 ubiquitin-conjugating enzyme]-L-cysteine + N(6)-ubiquitinyl-[acceptor protein]-L-lysine.. Its pathway is protein modification; protein ubiquitination. E3 ubiquitin ligase that acts as a key regulator of DNA repair in response to replication stress. Acts by mediating ubiquitination of the CMG helicase complex, promoting the unloading of the CMG helicase complex by the p97 ATPase (cdc-48.1 or cdc-48.2). This is E3 ubiquitin-protein ligase trul-1 from Caenorhabditis elegans.